Reading from the N-terminus, the 445-residue chain is Maltoporin 2 (445 aa).

Residues 1–25 (MKMKAKWLPIAAAVTAALASQAAFA) form the signal peptide.

This sequence belongs to the porin LamB (TC 1.B.3) family. Homotrimer formed of three 18-stranded antiparallel beta-barrels, containing three independent channels.

The protein localises to the cell outer membrane. The catalysed reaction is beta-maltose(in) = beta-maltose(out). Functionally, involved in the transport of maltose and maltodextrins. The polypeptide is Maltoporin 2 (Aeromonas salmonicida (strain A449)).